The following is a 731-amino-acid chain: Auxin response factor 3 (731 aa).

Residues 1-22 show a composition bias toward low complexity; sequence MASSASSSSSPSSRPPLMALPS. The tract at residues 1-41 is disordered; it reads MASSASSSSSPSSRPPLMALPSFYRPPWPSERGGEQRATDC. Residues 191–293 constitute a DNA-binding region (TF-B3); that stretch reads FCKTLTASDT…ELRLGVRRAT (103 aa).

The protein belongs to the ARF family. As to quaternary structure, homo and heterodimers. As to expression, expressed in roots, culms, leaves and young panicles.

The protein localises to the nucleus. Its function is as follows. Auxin response factors (ARFs) are transcriptional factors that bind specifically to the DNA sequence 5'-TGTCTC-3' found in the auxin-responsive promoter elements (AuxREs). This chain is Auxin response factor 3 (ARF3), found in Oryza sativa subsp. japonica (Rice).